A 391-amino-acid polypeptide reads, in one-letter code: MKTVREIEFNSKTVLVRVDYNLPMDENGNIADDNRIRATLPLVNYLVDKGAKIVLASHMGRPKGKPAASLSLAPAAKRLSELLGFEVVFVDDCIGPKVKERVDQLEPGQIILLENLRFYKGEEENDPEFARSLAELCQVYVNDAFAVSHRTAASIVAITRFVREACAGFLLEKEVKCFHDSIENPVHPLVAIIGGAKVSSKLGALENMLNHVDALVIGGAMANTFLKSQGNDVGASMVEEDLVETAAHIVQEARDRKINLILPVDLVVADRFDADAQTRVVDVKAVPQGWMALDIGPETGAIFARAIQRAATIVWNGPMGVFEMKPFCNGTKMVAAAVAAADAFSVVGGGDTGLAVNLCGVADKMSYVSTGGGAFLHLMEGKKLPGVTALD.

Residues 19–21, R35, 58–61, R117, and R150 each bind substrate; these read DYN and HMGR. ATP is bound by residues K201, E323, and 349-352; that span reads GGDT.

The protein belongs to the phosphoglycerate kinase family. In terms of assembly, monomer.

It is found in the cytoplasm. The enzyme catalyses (2R)-3-phosphoglycerate + ATP = (2R)-3-phospho-glyceroyl phosphate + ADP. The protein operates within carbohydrate degradation; glycolysis; pyruvate from D-glyceraldehyde 3-phosphate: step 2/5. The protein is Phosphoglycerate kinase of Desulforapulum autotrophicum (strain ATCC 43914 / DSM 3382 / VKM B-1955 / HRM2) (Desulfobacterium autotrophicum).